The following is a 320-amino-acid chain: Ferrochelatase (320 aa).

Positions 194 and 275 each coordinate Fe cation.

The protein belongs to the ferrochelatase family.

Its subcellular location is the cytoplasm. The catalysed reaction is heme b + 2 H(+) = protoporphyrin IX + Fe(2+). It functions in the pathway porphyrin-containing compound metabolism; protoheme biosynthesis; protoheme from protoporphyrin-IX: step 1/1. Functionally, catalyzes the ferrous insertion into protoporphyrin IX. This Enterobacter sp. (strain 638) protein is Ferrochelatase.